We begin with the raw amino-acid sequence, 399 residues long: Elongation factor Tu (399 aa).

The region spanning 10-209 is the tr-type G domain; it reads KPHVNIGTIG…AVDSYIPTPT (200 aa). The tract at residues 19–26 is G1; it reads GHVDHGKT. 19-26 provides a ligand contact to GTP; the sequence is GHVDHGKT. Residue Thr26 coordinates Mg(2+). The interval 60–64 is G2; it reads GITIA. A G3 region spans residues 81-84; the sequence is DCPG. GTP contacts are provided by residues 81–85 and 136–139; these read DCPGH and NKAD. Residues 136–139 form a G4 region; the sequence is NKAD. The interval 174–176 is G5; that stretch reads SAL.

The protein belongs to the TRAFAC class translation factor GTPase superfamily. Classic translation factor GTPase family. EF-Tu/EF-1A subfamily. As to quaternary structure, monomer.

Its subcellular location is the cytoplasm. The catalysed reaction is GTP + H2O = GDP + phosphate + H(+). In terms of biological role, GTP hydrolase that promotes the GTP-dependent binding of aminoacyl-tRNA to the A-site of ribosomes during protein biosynthesis. This chain is Elongation factor Tu, found in Campylobacter jejuni (strain RM1221).